The chain runs to 199 residues: UPF0301 protein Daci_1578 (199 aa).

The protein belongs to the UPF0301 (AlgH) family.

The protein is UPF0301 protein Daci_1578 of Delftia acidovorans (strain DSM 14801 / SPH-1).